The following is a 69-amino-acid chain: UPF0434 protein Rmet_0534 (69 aa).

The protein belongs to the UPF0434 family.

The polypeptide is UPF0434 protein Rmet_0534 (Cupriavidus metallidurans (strain ATCC 43123 / DSM 2839 / NBRC 102507 / CH34) (Ralstonia metallidurans)).